The following is a 366-amino-acid chain: Small ribosomal subunit biogenesis GTPase RsgA (366 aa).

In terms of domain architecture, CP-type G spans 107 to 266 (RSEGQILAAN…LIDTPGLRGV (160 aa)). Residues 154–157 (TKAD) and 208–216 (GQSGAGKST) each bind GTP. Zn(2+) contacts are provided by Cys289, Cys294, His296, and Cys302.

This sequence belongs to the TRAFAC class YlqF/YawG GTPase family. RsgA subfamily. Monomer. Associates with 30S ribosomal subunit, binds 16S rRNA. The cofactor is Zn(2+).

The protein localises to the cytoplasm. In terms of biological role, one of several proteins that assist in the late maturation steps of the functional core of the 30S ribosomal subunit. Helps release RbfA from mature subunits. May play a role in the assembly of ribosomal proteins into the subunit. Circularly permuted GTPase that catalyzes slow GTP hydrolysis, GTPase activity is stimulated by the 30S ribosomal subunit. The sequence is that of Small ribosomal subunit biogenesis GTPase RsgA from Streptomyces coelicolor (strain ATCC BAA-471 / A3(2) / M145).